We begin with the raw amino-acid sequence, 336 residues long: Mitochondrial thiamine diphosphate carrier 1 (336 aa).

6 helical membrane-spanning segments follow: residues 11 to 27 (RRAL…GGIS), 88 to 105 (VPAL…FTVL), 127 to 150 (YLSY…FDLL), 182 to 199 (LYSG…YAGL), 230 to 246 (SVSS…AGTF), and 303 to 322 (GLFP…FVVY). 3 Solcar repeats span residues 11 to 111 (RRAL…LKTF), 124 to 210 (LSPY…FKRS), and 231 to 328 (VSSF…ISDW).

This sequence belongs to the mitochondrial carrier (TC 2.A.29) family. Ubiquitous with highest expression in pollen.

Its subcellular location is the mitochondrion inner membrane. Mitochondrial transporter that mediates uptake of thiamine diphosphate (ThDP) into mitochondria. This chain is Mitochondrial thiamine diphosphate carrier 1, found in Zea mays (Maize).